A 222-amino-acid chain; its full sequence is MIEAVAVDIDGTLTDASRVLSPVSVSVIRELEVPVILVTGNTHCFTRAAAVLFGVRHFVAENGGVISSDDRIEVVGDRKLCDEAYKHLKEKFNIKKFDSRYRLTDLVLIRGFDVDAASRYLESLNLPVDLVDTGFAIHIKNRGITKGTGLRRISERLGIPTKRIAAIGDSPSDIPMMEISGFPAAVGNAHPSVKSAARYVADRAFGEGFAEIIDHMRAAGMI.

Catalysis depends on aspartate 8, which acts as the Nucleophile. Residues aspartate 8 and aspartate 10 each contribute to the Mg(2+) site. Lysine 146 provides a ligand contact to substrate. Positions 169 and 173 each coordinate Mg(2+).

Belongs to the archaeal SPP-like hydrolase family. Requires Mg(2+) as cofactor.

It carries out the reaction 2-phosphoglycolate + H2O = glycolate + phosphate. Catalyzes the dephosphorylation of 2-phosphoglycolate. The protein is Phosphoglycolate phosphatase of Methanothrix thermoacetophila (strain DSM 6194 / JCM 14653 / NBRC 101360 / PT) (Methanosaeta thermophila).